A 483-amino-acid chain; its full sequence is GTPase Der (483 aa).

2 consecutive EngA-type G domains span residues 3–167 (FTLA…GEER) and 212–387 (LRIA…EIWN). GTP contacts are provided by residues 9 to 16 (GRPNVGKS), 56 to 60 (DTAGL), 119 to 122 (NKAE), 218 to 225 (GRPNAGKS), 265 to 269 (DTAGM), and 330 to 333 (NKWD). The KH-like domain maps to 388–472 (RRISTGRLNR…PIRLSLRTSD (85 aa)).

Belongs to the TRAFAC class TrmE-Era-EngA-EngB-Septin-like GTPase superfamily. EngA (Der) GTPase family. In terms of assembly, associates with the 50S ribosomal subunit.

GTPase that plays an essential role in the late steps of ribosome biogenesis. The chain is GTPase Der from Brucella suis biovar 1 (strain 1330).